Reading from the N-terminus, the 131-residue chain is Large ribosomal subunit protein bL19 (131 aa).

A disordered region spans residues 107–131 (GKSARIAERAERGSDKGKAAPAAAE). A compositionally biased stretch (basic and acidic residues) spans 111–124 (RIAERAERGSDKGK).

Belongs to the bacterial ribosomal protein bL19 family.

This protein is located at the 30S-50S ribosomal subunit interface and may play a role in the structure and function of the aminoacyl-tRNA binding site. The polypeptide is Large ribosomal subunit protein bL19 (Methylobacterium sp. (strain 4-46)).